We begin with the raw amino-acid sequence, 587 residues long: Thiol:disulfide interchange protein DsbD 2 (587 aa).

The signal sequence occupies residues 1-18 (MRVLILLLMLLLPGLSQA). Residues 19 to 172 (QPGDDLFAPR…SLQAGNLAWS (154 aa)) are Periplasmic-facing. 2 cysteine pairs are disulfide-bonded: C124/C130 and C188/C308. A helical transmembrane segment spans residues 173–193 (LLLFFGLGLLLAFAPCSLPML). Topologically, residues 194–216 (PILAGLVVGSGAGPRRGLLLAGS) are cytoplasmic. A helical membrane pass occupies residues 217–237 (YVLSMALVYAGLGVVAALLGG). The Periplasmic segment spans residues 238–246 (NLQAWLQQP). A helical membrane pass occupies residues 247 to 267 (WLLGSFAALFVFLALPMFGFF). The Cytoplasmic portion of the chain corresponds to 268 to 299 (ELQLPAALRDRLDGLSRGRKGGSLAGAAALGA). The helical transmembrane segment at 300 to 320 (LSGLLVGPCMTAPLAGALLYI) threads the bilayer. Topologically, residues 321–330 (AQTGNALHGG) are periplasmic. The helical transmembrane segment at 331–351 (LVLFSLGLGIGMPLLLLVTVG) threads the bilayer. Residues 352 to 360 (SRFLPKPGP) are Cytoplasmic-facing. The chain crosses the membrane as a helical span at residues 361–381 (WMNLVKGVFGFLFLGTAWILL). Topologically, residues 382 to 383 (RP) are periplasmic. The helical transmembrane segment at 384–404 (LLGEALWIGLGGALLLVLAYA) threads the bilayer. Topologically, residues 405–416 (ALHTARGLARHA) are cytoplasmic. A helical membrane pass occupies residues 417–437 (VLFGAAGCIFGLWGAAMLLGA). Topologically, residues 438 to 587 (AAGADDPWRP…AHWQATRERG (150 aa)) are periplasmic. The region spanning 448–585 (LQVYAAANRG…FLAHWQATRE (138 aa)) is the Thioredoxin domain. A disulfide bridge links C500 with C503.

Belongs to the thioredoxin family. DsbD subfamily.

The protein resides in the cell inner membrane. It catalyses the reaction [protein]-dithiol + NAD(+) = [protein]-disulfide + NADH + H(+). It carries out the reaction [protein]-dithiol + NADP(+) = [protein]-disulfide + NADPH + H(+). Functionally, required to facilitate the formation of correct disulfide bonds in some periplasmic proteins and for the assembly of the periplasmic c-type cytochromes. Acts by transferring electrons from cytoplasmic thioredoxin to the periplasm. This transfer involves a cascade of disulfide bond formation and reduction steps. This chain is Thiol:disulfide interchange protein DsbD 2, found in Pseudomonas aeruginosa (strain ATCC 15692 / DSM 22644 / CIP 104116 / JCM 14847 / LMG 12228 / 1C / PRS 101 / PAO1).